The primary structure comprises 91 residues: Probable Fe(2+)-trafficking protein (91 aa).

The protein belongs to the Fe(2+)-trafficking protein family.

In terms of biological role, could be a mediator in iron transactions between iron acquisition and iron-requiring processes, such as synthesis and/or repair of Fe-S clusters in biosynthetic enzymes. In Xanthomonas euvesicatoria pv. vesicatoria (strain 85-10) (Xanthomonas campestris pv. vesicatoria), this protein is Probable Fe(2+)-trafficking protein.